The primary structure comprises 152 residues: Small heat shock protein HspA (152 aa).

The 111-residue stretch at 29 to 139 (TAGEANYPPC…KPRRIPIDNL (111 aa)) folds into the sHSP domain.

It belongs to the small heat shock protein (HSP20) family.

The chain is Small heat shock protein HspA (hspA) from Bradyrhizobium diazoefficiens (strain JCM 10833 / BCRC 13528 / IAM 13628 / NBRC 14792 / USDA 110).